Reading from the N-terminus, the 98-residue chain is Feather beta keratin (98 aa).

N-acetylserine is present on Ser2.

This sequence belongs to the avian keratin family. The avian keratins (F-ker, S-ker, C-ker and B-ker) are a complex mixture of very similar polypeptides.

In Mycteria americana (Wood stork), this protein is Feather beta keratin.